Reading from the N-terminus, the 369-residue chain is DNA replication and repair protein RecF (369 aa).

30–37 (GPNGSGKT) is a binding site for ATP.

It belongs to the RecF family.

It is found in the cytoplasm. Functionally, the RecF protein is involved in DNA metabolism; it is required for DNA replication and normal SOS inducibility. RecF binds preferentially to single-stranded, linear DNA. It also seems to bind ATP. This is DNA replication and repair protein RecF from Chlorobium luteolum (strain DSM 273 / BCRC 81028 / 2530) (Pelodictyon luteolum).